We begin with the raw amino-acid sequence, 343 residues long: NADH-cytochrome b5 reductase 2 (343 aa).

A helical transmembrane segment spans residues 41-61 (ILLGAAAVGLAGAGAYFFSGA). In terms of domain architecture, FAD-binding FR-type spans 92–197 (QGWLSLKLEE…KGPLPKYPWE (106 aa)). 200–235 (KHKHIALVAGGTGITPMYQLIRAIFNNPDDKTKVTL) is an FAD binding site.

The protein belongs to the flavoprotein pyridine nucleotide cytochrome reductase family. It depends on FAD as a cofactor.

It localises to the mitochondrion outer membrane. The enzyme catalyses 2 Fe(III)-[cytochrome b5] + NADH = 2 Fe(II)-[cytochrome b5] + NAD(+) + H(+). Functionally, may mediate the reduction of outer membrane cytochrome b5. The chain is NADH-cytochrome b5 reductase 2 (mcr-1) from Neurospora crassa (strain ATCC 24698 / 74-OR23-1A / CBS 708.71 / DSM 1257 / FGSC 987).